We begin with the raw amino-acid sequence, 237 residues long: Proteasome subunit alpha type-5 (237 aa).

This sequence belongs to the peptidase T1A family. As to quaternary structure, the 26S proteasome consists of a 20S proteasome core and two 19S regulatory subunits. The 20S proteasome core is composed of 28 subunits that are arranged in four stacked rings, resulting in a barrel-shaped structure. The two end rings are each formed by seven alpha subunits, and the two central rings are each formed by seven beta subunits. The catalytic chamber with the active sites is on the inside of the barrel.

It localises to the cytoplasm. Its subcellular location is the nucleus. Its function is as follows. The proteasome is a multicatalytic proteinase complex which is characterized by its ability to cleave peptides with Arg, Phe, Tyr, Leu, and Glu adjacent to the leaving group at neutral or slightly basic pH. The proteasome has an ATP-dependent proteolytic activity. This chain is Proteasome subunit alpha type-5 (PAE1), found in Oryza sativa subsp. japonica (Rice).